A 134-amino-acid polypeptide reads, in one-letter code: uncharacterized protein (134 aa).

To E.coli YbcV and YdfO.

This is an uncharacterized protein from Escherichia coli (strain K12).